The chain runs to 272 residues: MHIYKEQEAEPSTGLMMPEPAPVASPGSGGSGGSGSVGAEKIGSRGKIEIKRIENTTNRQVTFCKRRSGLLKKAYELSVLCDAEVALVVFSSRGRLYEYSNNSVKETIERYKKANSDTSNASTVAEINAQHYQQEAAKLKQQITNLQNSNRTLVGDNITTMNHRELKQLEGRLDKGLGKIRARKNELLCAEIEYMQRRETELQNDNMYLKSKVAESERGLQTVNMMGSASTSEYVQNMIHYDPRNFLQFNIMHQPQYYPEQEDRKAFMSDER.

A disordered region spans residues 1 to 41 (MHIYKEQEAEPSTGLMMPEPAPVASPGSGGSGGSGSVGAEK). A compositionally biased stretch (gly residues) spans 27–36 (GSGGSGGSGS). In terms of domain architecture, MADS-box spans 43 to 103 (GSRGKIEIKR…GRLYEYSNNS (61 aa)). Residues 129–219 (AQHYQQEAAK…KSKVAESERG (91 aa)) form the K-box domain.

Expressed in the lodicule, stamen carpel and ovule primordia.

It localises to the nucleus. Its function is as follows. Probable transcription factor involved in the development of floral organs. Acts as a C-class protein in association with MADS3. Involved in the control of lodicule number (whorl 2), stamen specification (whorl 3), floral meristem determinacy and regulation of the carpel morphogenesis (whorl 4). Plays a more predominant role in floral meristem determinacy than MADS3. The polypeptide is MADS-box transcription factor 58 (MADS58) (Oryza sativa subsp. japonica (Rice)).